The primary structure comprises 182 residues: Peptidyl-prolyl cis-trans isomerase H (182 aa).

One can recognise a PPIase cyclophilin-type domain in the interval 15-181 (FFDITIGGEP…LDVVISQCGE (167 aa)).

The protein belongs to the cyclophilin-type PPIase family. PPIase H subfamily.

It is found in the nucleus. The catalysed reaction is [protein]-peptidylproline (omega=180) = [protein]-peptidylproline (omega=0). Its function is as follows. PPIases accelerate the folding of proteins. It catalyzes the cis-trans isomerization of proline imidic peptide bonds in oligopeptides. The sequence is that of Peptidyl-prolyl cis-trans isomerase H (CYP3) from Gibberella zeae (strain ATCC MYA-4620 / CBS 123657 / FGSC 9075 / NRRL 31084 / PH-1) (Wheat head blight fungus).